The sequence spans 483 residues: uncharacterized protein (483 aa).

A WD repeat occupies 96–137; the sequence is IQCDQDPLSSISWSPSGELLLWSSFDSKITVWSLNTQKGYLL.

This is an uncharacterized protein from Schizosaccharomyces pombe (strain 972 / ATCC 24843) (Fission yeast).